We begin with the raw amino-acid sequence, 507 residues long: Sugar transport protein 6 (507 aa).

At 1–20 (MAVVVSNANAPAFEAKMTVY) the chain is on the cytoplasmic side. 12 consecutive transmembrane segments (helical) span residues 21 to 41 (VFIC…DIGI), 78 to 98 (FLQL…FVAS), 115 to 135 (IFFL…MLII), 138 to 158 (LFLG…LSEI), 165 to 185 (GGLN…ANIV), 199 to 219 (IALG…LLII), 280 to 300 (FIIG…AIMF), 318 to 338 (LSAV…IYLV), 345 to 365 (FLLL…GIIL), 381 to 401 (LVVV…WGPL), 418 to 438 (GFAV…QAFL), and 447 to 467 (GIFF…FFFI). Residues 468-507 (PETKGIAIDDMRESVWKPHWFWKRYMLPEDDHHDIEKRNA) are Cytoplasmic-facing.

It belongs to the major facilitator superfamily. Sugar transporter (TC 2.A.1.1) family. Pollen specific.

It is found in the membrane. Inhibited by uncouplers such as 2,4-dinitrophenol and carbonyl cyanide-m-chlorophenyl-hydrazone. Its function is as follows. Mediates an active uptake of hexoses, probably by sugar/hydrogen symport. Can transport glucose, 3-O-methylglucose, mannose, fructose and galactose, and, to a lower extent, xylose and ribulose. This Arabidopsis thaliana (Mouse-ear cress) protein is Sugar transport protein 6 (STP6).